The sequence spans 453 residues: Serine/threonine-protein phosphatase 2A 55 kDa regulatory subunit B delta isoform (453 aa).

WD repeat units follow at residues 32-71 (AEADIISTVEFNYSGDLLATGDKGGRVVIFQREQENKGRA), 97-138 (EIEE…KRAE), 181-219 (AHTYHINSISVNSDHETYLSADDLRINLWHLEITDRSFN), and 230-270 (ELTE…LCDR). Residue S285 is modified to Phosphoserine. 3 WD repeats span residues 289-327 (EIISSISDVKFSHSGRYMMTRDYLSVKVWDLNMEGRPVE), 344-385 (ENDC…DVTL), and 420-452 (DFNKKILHTAWHPMESIIAVAATNNLYIFQDKI). Phosphotyrosine is present on Y305. A Phosphothreonine modification is found at T308.

It belongs to the phosphatase 2A regulatory subunit B family. PP2A consists of a common heterodimeric core enzyme, composed of a 36 kDa catalytic subunit (subunit C) and a 65 kDa constant regulatory subunit (PR65 or subunit A), that associates with a variety of regulatory subunits. Proteins that associate with the core dimer include three families of regulatory subunits B (the R2/B/PR55/B55, R3/B''/PR72/PR130/PR59 and R5/B'/B56 families), the 48 kDa variable regulatory subunit, viral proteins, and cell signaling molecules. Interacts with IER5.

Its subcellular location is the cytoplasm. Its function is as follows. Substrate-recognition subunit of protein phosphatase 2A (PP2A) that plays a key role in cell cycle by controlling mitosis entry and exit. Involved in chromosome clustering during late mitosis by mediating dephosphorylation of MKI67. The activity of PP2A complexes containing PPP2R2D (PR55-delta) fluctuate during the cell cycle: the activity is high in interphase and low in mitosis. In Mus musculus (Mouse), this protein is Serine/threonine-protein phosphatase 2A 55 kDa regulatory subunit B delta isoform.